The primary structure comprises 275 residues: Lectin (275 aa).

The first 30 residues, 1–30, serve as a signal peptide directing secretion; sequence MASLQTQMISFYLIFLSILLTTIFFFKVNS. The D-glucose site is built by Asp-111 and Gly-129. Residues Glu-149 and Asp-151 each contribute to the Mn(2+) site. 4 residues coordinate Ca(2+): Asp-151, Phe-153, Asn-155, and Asp-159. Mn(2+) contacts are provided by Asp-159 and His-166. Positions 211–217 are excised as a propeptide; that stretch reads NSLEEEN. Gly-246 and Ala-247 together coordinate D-glucose. The propeptide occupies 270–275; sequence KQAADA.

The protein belongs to the leguminous lectin family. In terms of assembly, heterotetramer of two alpha and two beta chains. Post-translationally, the mature form consists of two chains, alpha and beta, produced by cleavage of the immature protein. These remain cleaved, yet fold together to form one subunit.

In terms of biological role, D-mannose specific lectin. This is Lectin from Lens culinaris subsp. tomentosus (Lentil).